Consider the following 327-residue polypeptide: uncharacterized protein (327 aa).

The disordered stretch occupies residues Pro-12–Pro-31. A run of 2 helical transmembrane segments spans residues Val-183–Leu-203 and Val-292–Met-312.

The protein resides in the membrane. This is an uncharacterized protein from Arabidopsis thaliana (Mouse-ear cress).